Here is a 420-residue protein sequence, read N- to C-terminus: Anaerobic glycerol-3-phosphate dehydrogenase subunit B (420 aa).

Belongs to the anaerobic G-3-P dehydrogenase subunit B family. Composed of a catalytic GlpA/B dimer and of membrane bound GlpC. The cofactor is FMN.

The catalysed reaction is a quinone + sn-glycerol 3-phosphate = dihydroxyacetone phosphate + a quinol. It functions in the pathway polyol metabolism; glycerol degradation via glycerol kinase pathway; glycerone phosphate from sn-glycerol 3-phosphate (anaerobic route): step 1/1. In terms of biological role, conversion of glycerol 3-phosphate to dihydroxyacetone. Uses fumarate or nitrate as electron acceptor. This Pectobacterium carotovorum subsp. carotovorum (strain PC1) protein is Anaerobic glycerol-3-phosphate dehydrogenase subunit B.